Reading from the N-terminus, the 80-residue chain is U19-lycotoxin-Ls1b (80 aa).

Positions 1-22 are cleaved as a signal peptide; sequence MSPKVQALIFIVGLITLLAAHA. A propeptide spanning residues 23–34 is cleaved from the precursor; the sequence is QEELSDNIESER. 4 disulfides stabilise this stretch: cysteine 36/cysteine 50, cysteine 43/cysteine 55, cysteine 49/cysteine 66, and cysteine 57/cysteine 64.

Belongs to the neurotoxin 02 (plectoxin) family. 05 (U19-lycotoxin) subfamily. In terms of tissue distribution, expressed by the venom gland.

Its subcellular location is the secreted. The protein is U19-lycotoxin-Ls1b of Lycosa singoriensis (Wolf spider).